The following is a 187-amino-acid chain: Ribosome-recycling factor (187 aa).

This sequence belongs to the RRF family.

The protein localises to the cytoplasm. Responsible for the release of ribosomes from messenger RNA at the termination of protein biosynthesis. May increase the efficiency of translation by recycling ribosomes from one round of translation to another. In Ruegeria sp. (strain TM1040) (Silicibacter sp.), this protein is Ribosome-recycling factor.